The following is a 213-amino-acid chain: Small ribosomal subunit protein uS5 (213 aa).

The interval 1-42 (MSERDRNGGRSADNNRNDRNERGGRNDRGGRNDRRNNQQDER) is disordered. In terms of domain architecture, S5 DRBM spans 45 to 108 (YIERVVTINR…EEARKNFFRV (64 aa)).

Belongs to the universal ribosomal protein uS5 family. As to quaternary structure, part of the 30S ribosomal subunit. Contacts proteins S4 and S8.

Its function is as follows. With S4 and S12 plays an important role in translational accuracy. Located at the back of the 30S subunit body where it stabilizes the conformation of the head with respect to the body. This Corynebacterium urealyticum (strain ATCC 43042 / DSM 7109) protein is Small ribosomal subunit protein uS5.